The sequence spans 344 residues: Phosphoribosylformylglycinamidine cyclo-ligase (344 aa).

It belongs to the AIR synthase family.

It is found in the cytoplasm. The enzyme catalyses 2-formamido-N(1)-(5-O-phospho-beta-D-ribosyl)acetamidine + ATP = 5-amino-1-(5-phospho-beta-D-ribosyl)imidazole + ADP + phosphate + H(+). It participates in purine metabolism; IMP biosynthesis via de novo pathway; 5-amino-1-(5-phospho-D-ribosyl)imidazole from N(2)-formyl-N(1)-(5-phospho-D-ribosyl)glycinamide: step 2/2. The polypeptide is Phosphoribosylformylglycinamidine cyclo-ligase (Anaeromyxobacter sp. (strain Fw109-5)).